The following is a 177-amino-acid chain: MLKGVSLYLVGMMGSGKSTVGRLLAEKLGYGFVDLDALIEQVSGKRVGEIFEREGEAVFRDLESRVLAEVSAYTRLVVATGGGVVLARRNWGYLHHGVVVWLDADIETLLGRVEHEPGTRPLLAGGDRHLRLVELLGERARLYAQADVRVSAAGLPPAVAEETLRCLAARLAEDSAP.

14 to 19 lines the ATP pocket; sequence GSGKST. Ser-18 serves as a coordination point for Mg(2+). Residues Asp-36, Arg-60, and Gly-82 each contribute to the substrate site. Arg-120 provides a ligand contact to ATP. Arg-139 serves as a coordination point for substrate.

The protein belongs to the shikimate kinase family. As to quaternary structure, monomer. The cofactor is Mg(2+).

It localises to the cytoplasm. The catalysed reaction is shikimate + ATP = 3-phosphoshikimate + ADP + H(+). It participates in metabolic intermediate biosynthesis; chorismate biosynthesis; chorismate from D-erythrose 4-phosphate and phosphoenolpyruvate: step 5/7. Catalyzes the specific phosphorylation of the 3-hydroxyl group of shikimic acid using ATP as a cosubstrate. The protein is Shikimate kinase of Gloeobacter violaceus (strain ATCC 29082 / PCC 7421).